The following is a 585-amino-acid chain: Frizzled-5 (585 aa).

An N-terminal signal peptide occupies residues 1 to 26; it reads MARPDPSAPPSLLLLLLAQLVGRAAA. At 27–238 the chain is on the extracellular side; it reads ASKAPVCQEI…ADERTFATFW (212 aa). Residues 28-150 enclose the FZ domain; sequence SKAPVCQEIT…RDAEVLCMDY (123 aa). 5 cysteine pairs are disulfide-bonded: Cys-33-Cys-94, Cys-41-Cys-87, Cys-78-Cys-116, Cys-105-Cys-147, and Cys-109-Cys-133. Asn-47 is a glycosylation site (N-linked (GlcNAc...) asparagine). N-linked (GlcNAc...) asparagine glycosylation is present at Asn-151. The segment at 156–179 is disordered; sequence TTAPPRPFPAKPTLPGPPGAPASG. Pro residues predominate over residues 159-175; sequence PPRPFPAKPTLPGPPGA. A helical membrane pass occupies residues 239–259; sequence IGLWSVLCFISTSTTVATFLI. The Cytoplasmic portion of the chain corresponds to 260 to 270; it reads DMERFRYPERP. The helical transmembrane segment at 271–291 threads the bilayer; sequence IIFLSACYLCVSLGFLVRLVV. Topologically, residues 292-315 are extracellular; the sequence is GHASVACSREHNHIHYETTGPALC. The chain crosses the membrane as a helical span at residues 316–336; sequence TIVFLLVYFFGMASSIWWVIL. The Cytoplasmic portion of the chain corresponds to 337 to 358; that stretch reads SLTWFLAAGMKWGNEAIAGYAQ. A helical transmembrane segment spans residues 359–379; that stretch reads YFHLAAWLIPSVKSITALALS. At 380 to 402 the chain is on the extracellular side; the sequence is SVDGDPVAGICYVGNQNLNSLRG. The chain crosses the membrane as a helical span at residues 403–423; it reads FVLGPLVLYLLVGTLFLLAGF. Over 424–449 the chain is Cytoplasmic; it reads VSLFRIRSVIKQGGTKTDKLEKLMIR. Residues 450-470 traverse the membrane as a helical segment; it reads IGIFTLLYTVPASIVVACYLY. Residues 471-500 are Extracellular-facing; sequence EQHYRESWEAALTCACPGHDTGQPRAKPEY. A helical membrane pass occupies residues 501–521; the sequence is WVLMLKYFMCLVVGITSGVWI. Topologically, residues 522–585 are cytoplasmic; the sequence is WSGKTVESWR…YHKQVSLSHV (64 aa). The short motif at 525–530 is the Lys-Thr-X-X-X-Trp motif, mediates interaction with the PDZ domain of Dvl family members element; the sequence is KTVESW. A PDZ-binding motif is present at residues 583-585; it reads SHV.

It belongs to the G-protein coupled receptor Fz/Smo family. In terms of assembly, binding of unsaturated fatty acid molecules (via FZ domain) promotes homodimerization. Interacts with WNT2B. Interacts with WNT3A. Interacts with WNT7A. Interacts with GOPC. Ubiquitinated by RNF43 and ZNRF3, leading to its degradation by the proteasome.

Its subcellular location is the cell membrane. The protein resides in the golgi apparatus membrane. The protein localises to the synapse. It localises to the perikaryon. It is found in the cell projection. Its subcellular location is the dendrite. The protein resides in the axon. In terms of biological role, receptor for Wnt proteins. Functions in the canonical Wnt/beta-catenin signaling pathway. In vitro activates WNT2, WNT10B, WNT5A, but not WNT2B or WNT4 signaling. In neurons, activation by WNT7A promotes formation of synapses. May be involved in transduction and intercellular transmission of polarity information during tissue morphogenesis and/or in differentiated tissues. Plays a role in yolk sac angiogenesis and in placental vascularization. Plays a role in ocular development. This is Frizzled-5 (FZD5) from Homo sapiens (Human).